We begin with the raw amino-acid sequence, 453 residues long: Pup--protein ligase (453 aa).

Glutamate 9 provides a ligand contact to Mg(2+). Arginine 53 contributes to the ATP binding site. Tyrosine 55 contacts Mg(2+). Aspartate 57 (proton acceptor) is an active-site residue. A Mg(2+)-binding site is contributed by glutamate 63. ATP is bound by residues threonine 66 and tryptophan 420.

Belongs to the Pup ligase/Pup deamidase family. Pup-conjugating enzyme subfamily.

It carries out the reaction ATP + [prokaryotic ubiquitin-like protein]-L-glutamate + [protein]-L-lysine = ADP + phosphate + N(6)-([prokaryotic ubiquitin-like protein]-gamma-L-glutamyl)-[protein]-L-lysine.. It functions in the pathway protein degradation; proteasomal Pup-dependent pathway. The protein operates within protein modification; protein pupylation. In terms of biological role, catalyzes the covalent attachment of the prokaryotic ubiquitin-like protein modifier Pup to the proteasomal substrate proteins, thereby targeting them for proteasomal degradation. This tagging system is termed pupylation. The ligation reaction involves the side-chain carboxylate of the C-terminal glutamate of Pup and the side-chain amino group of a substrate lysine. This chain is Pup--protein ligase, found in Kribbella flavida (strain DSM 17836 / JCM 10339 / NBRC 14399).